Reading from the N-terminus, the 158-residue chain is Small ribosomal subunit protein uS7 (158 aa).

The protein belongs to the universal ribosomal protein uS7 family. As to quaternary structure, part of the 30S ribosomal subunit. Contacts proteins S9 and S11.

Its function is as follows. One of the primary rRNA binding proteins, it binds directly to 16S rRNA where it nucleates assembly of the head domain of the 30S subunit. Is located at the subunit interface close to the decoding center, probably blocks exit of the E-site tRNA. This is Small ribosomal subunit protein uS7 from Phocaeicola vulgatus (strain ATCC 8482 / DSM 1447 / JCM 5826 / CCUG 4940 / NBRC 14291 / NCTC 11154) (Bacteroides vulgatus).